Consider the following 116-residue polypeptide: Large ribosomal subunit protein uL24 (116 aa).

The protein belongs to the universal ribosomal protein uL24 family. In terms of assembly, part of the 50S ribosomal subunit.

Its function is as follows. One of two assembly initiator proteins, it binds directly to the 5'-end of the 23S rRNA, where it nucleates assembly of the 50S subunit. Functionally, one of the proteins that surrounds the polypeptide exit tunnel on the outside of the subunit. In Protochlamydia amoebophila (strain UWE25), this protein is Large ribosomal subunit protein uL24.